We begin with the raw amino-acid sequence, 145 residues long: Aminoglycoside N(6')-acetyltransferase type 1 (145 aa).

One can recognise an N-acetyltransferase domain in the interval 1-145; sequence MDIRQMNKTH…ERVIFYRKRC (145 aa). Positions 22, 25, 66, and 79 each coordinate substrate. Residues 81–83 and 89–94 contribute to the acetyl-CoA site; these read IFV and QRGVAK. A substrate-binding site is contributed by Asp115. Acetyl-CoA is bound at residue Asn120. Substrate is bound at residue Glu136.

As to quaternary structure, homodimer.

It carries out the reaction kanamycin B + acetyl-CoA = N(6')-acetylkanamycin B + CoA + H(+). Its function is as follows. Catalyzes the transfer of an acetyl group from acetyl-CoA to the 6'-amino group of aminoglycoside molecules conferring resistance to antibiotics containing the purpurosamine ring including amikacin, tobramycin, dibekacin and ribostamycin. Able to acetylate eukaryotic histone proteins. In Salmonella enteritidis, this protein is Aminoglycoside N(6')-acetyltransferase type 1.